We begin with the raw amino-acid sequence, 517 residues long: MFS efflux transporter inpD (517 aa).

A disordered region spans residues 1–24; that stretch reads MEKTQTPSLTPDELSARSSTPFEE. A run of 5 helical transmembrane segments spans residues 37–57, 59–79, 89–109, 112–132, and 151–171; these read LKFS…ALSL, DIGW…LVFG, IVYL…ATAP, IALI…LSGA, and ILGA…GGII. N-linked (GlcNAc...) asparagine glycosylation is present at Asn-172. The next 9 membrane-spanning stretches (helical) occupy residues 178 to 198, 219 to 239, 247 to 267, 292 to 312, 328 to 348, 352 to 372, 381 to 401, 412 to 432, and 485 to 505; these read WIFY…VFLL, LPAF…LLWG, NARI…FMLV, FFSF…PIWL, LPII…TPVI, VPFM…LSTL, VLGF…QTLV, IPIG…IALS, and AIVK…IGVL.

Belongs to the major facilitator superfamily.

The protein localises to the cell membrane. MFS efflux transporter; part of the inp gene cluster that mediates the biosynthesis of fellutamide B, a mycotoxin that acts as a proteasome inhibitor. In the first step of fellutabmide B biosynthesis inpC activates 3-hydroxydodecanoic acid to generate 3-hydroxydodecanoyl-AMP that is then loaded onto the T0 domain of inpB. The 3-hydroxydodecanoyl-S-phosphopantetheinyl-T0 is sequentially extended with L-Asn and L-Gln by the two CAT modules of inpB. The linear lipodipeptide from inpB is then transferred onto inpA for the addition of the third amino acid, L-Leu. Reductive releasing of the lipotripeptide by the TE domain of inpA produces (2S)-fellutamide B. InpF might be involved in the release and transfer of the lipodipeptide from inpB to inpA. The inp cluster-encoded proteasome subunit inpE confers resistance to internally produced fellutamides. The MFS efflux transporter inpD may contribute to fellutamide resistance as well. The sequence is that of MFS efflux transporter inpD from Emericella nidulans (strain FGSC A4 / ATCC 38163 / CBS 112.46 / NRRL 194 / M139) (Aspergillus nidulans).